Here is a 582-residue protein sequence, read N- to C-terminus: Mitogen-activated protein kinase 17 (582 aa).

The disordered stretch occupies residues 22–61 (SSSFHLTTTGDDTVKDLHDPRREDAEGDGWEEVHEGPESD). Residues 33–45 (DTVKDLHDPRRED) show a composition bias toward basic and acidic residues. A Protein kinase domain is found at 105-396 (YKVSEVIGKG…AEEALTDPYF (292 aa)). ATP contacts are provided by residues 111–119 (IGKGSYGVV) and Lys-134. Asp-231 (proton acceptor) is an active-site residue. The residue at position 267 (Thr-267) is a Phosphothreonine. The TXY signature appears at 267-269 (TDY). Tyr-269 is modified (phosphotyrosine). 2 disordered regions span residues 474 to 502 (EGVS…GNKH) and 542 to 582 (ISAS…QLKT). The span at 482–491 (SSPQLRQNAS) shows a compositional bias: polar residues. Positions 493–502 (PRERAIGNKH) are enriched in basic and acidic residues. Residues 557 to 572 (DQEDSLTESMDETADE) show a composition bias toward acidic residues.

Belongs to the protein kinase superfamily. CMGC Ser/Thr protein kinase family. MAP kinase subfamily. In terms of processing, dually phosphorylated on Thr-267 and Tyr-269, which activates the enzyme.

It catalyses the reaction L-seryl-[protein] + ATP = O-phospho-L-seryl-[protein] + ADP + H(+). The enzyme catalyses L-threonyl-[protein] + ATP = O-phospho-L-threonyl-[protein] + ADP + H(+). Its activity is regulated as follows. Activated by threonine and tyrosine phosphorylation. The chain is Mitogen-activated protein kinase 17 (MPK17) from Oryza sativa subsp. japonica (Rice).